A 1386-amino-acid polypeptide reads, in one-letter code: MGPEFEDSIPLVHSDNRTTTIYSVYIIISDIFSFVQWLLFKVLNLIIIDSPAFVLRLLSKNFEINLHLSSILATLIGVSVVTYLVIRYKFLTGYSHSNDQKEGAGKKGIHPASSKVFVGKSKQDKKPSNYLDEFLLAIKVFGYLDKAVFHELTKSMTTQKLSHEEILCLDESLGFSIVVEGVAQVYTKKSKENSSKYKQRYFEEIEEERDEFLILGDKQYQLLNEVKSGAPLSSLFSTLDLFRPRNKNEEMALTPNDEDGNSVVALNMDYLSKSEPATDSKLSNSDDDENGQDYPEIIVRPKKSHNNGTITIAIIPHTAFERVQSKYPKATSHIVTMVLTRLYKVTMSTVQNYLGLTSEILKSEIKLNEENATSLPRYFVDGLLERLNKKEEAEAEAENLPKKLKHHHRNQLQRTTSRYVSLDSKVKSNHPGDLLSSVPISRSEFQKKVLPKSSTTSLSDGDNKRMNFTDEMEETEENSLRVAIIENIFKMVGIEETNGIVERTGYFQSLSSSTSSSIVGLDSLNQSIMSGATTPTTKRSHPVFNNQGSLMNTINLAELRKPSTAENSTLPKLSGKKRLLSDMNIKDAFAKSLEIKYIGPDSTIVSQNSAITGLYYVIDGSLEIYNRSADVSAPNRYIYTVESGGIAGYLTSVVGFRSMVTIKTPKKTGAVVAYIPKNDYNKLLDKYYFLQLPVALKLKNLLSKQILTIDYALEWCHIPAGEVLCSQGDLANGFHVVLSGRFRVVRSTNKNTEKEDVEVLGEYGHGESIGEVEVLTASRRSNTLIAVRDSETARIPRSLFEMLSNENPSIMVSVSRLVASKVLASQYQPRERNFITSTTSQESFTSANYKTITILPTVSGLPVRQFAEKLVQALRQIGRNVIALDQASILTHLGRHAFDESLARLKLSGYFAYLEEEYETIVYICDTPVQSNWTSTCISQGDCILLLADAEDDSTTIGEYEQLLVKLKTTARTDLCLLHQDKVVRAGSTSPWLKNRIWVQGHHHIQMKFEQGANVLPHKKSFISDLAAKLSQNKAIKSTFEATKQHIKWYVKENDQSKVLKIYKDDFMRLARILSNEAVGLVLGGGGSRGISHVGVVTSLERHGIPVDIIGGTSIGSFVGGLYAKEYNIVSIYAMAKKFSKRISSVWRMLFDLTYPVTSYITGYEFNRGIWKVFGFAEIEDFWIKYFCNSANITNSTMDIHEKGYAWRFIRASMSLAGLLPPIAFNGCMLLDGGYLDNLPVNEMKKRGVKHIIAVDVGSVDDRTPMNYGDTLSGFWVLLNRWNPFSSHPNIPTMMDIQMRLTYVSSVNALEEAKRTPGVYYLRPPIDPYATLDFGKFDEIYKVGLKYADDLFADWKSKGKFPRIAGLVEKKKDGEEKKILYRRNSI.

Residues 1–19 are Cytoplasmic-facing; sequence MGPEFEDSIPLVHSDNRTT. The chain crosses the membrane as a helical span at residues 20-40; that stretch reads TIYSVYIIISDIFSFVQWLLF. Over 41 to 65 the chain is Lumenal; it reads KVLNLIIIDSPAFVLRLLSKNFEIN. The helical transmembrane segment at 66-86 threads the bilayer; it reads LHLSSILATLIGVSVVTYLVI. Residues 87–1386 lie on the Cytoplasmic side of the membrane; that stretch reads RYKFLTGYSH…KKILYRRNSI (1300 aa). A disordered region spans residues 394 to 416; it reads EAEAENLPKKLKHHHRNQLQRTT. Residues 402–411 show a composition bias toward basic residues; the sequence is KKLKHHHRNQ. Residues 577–701 and 697–821 contribute to the a nucleoside 3',5'-cyclic phosphate site; these read KRLL…LKNL and KLKN…VASK. Positions 1081–1245 constitute a PNPLA domain; the sequence is LVLGGGGSRG…LDNLPVNEMK (165 aa). A GXGXXG motif is present at residues 1085-1090; sequence GGGSRG. The short motif at 1112-1116 is the GXSXG element; the sequence is GTSIG. Ser-1114 (nucleophile) is an active-site residue. Catalysis depends on Asp-1232, which acts as the Proton acceptor. A DGA/G motif is present at residues 1232–1234; the sequence is DGG.

It belongs to the NTE family.

Its subcellular location is the endoplasmic reticulum membrane. The catalysed reaction is a 1-acyl-sn-glycero-3-phosphocholine + H2O = sn-glycerol 3-phosphocholine + a fatty acid + H(+). With respect to regulation, inhibited by organophosphorus esters. In terms of biological role, intracellular phospholipase B that catalyzes the double deacylation of phosphatidylcholine (PC) to glycerophosphocholine (GroPCho). Plays an important role in membrane lipid homeostasis. Responsible for the rapid PC turnover in response to inositol, elevated temperatures, or when choline is present in the growth medium. The protein is Lysophospholipase NTE1 (NTE1) of Candida albicans (strain SC5314 / ATCC MYA-2876) (Yeast).